The chain runs to 234 residues: Transcriptional regulatory protein CitB (234 aa).

The Response regulatory domain maps to 5–121 (TTLIVEDEPM…RLQHTLERFA (117 aa)). Asp-56 is modified (4-aspartylphosphate). Residues 181-200 (ADSLARILGSSKTTARRYLE) constitute a DNA-binding region (H-T-H motif).

As to quaternary structure, in vitro CitB and the CitA kinase domain form a complex, formation of which is enhanced by ATP. Post-translationally, phosphorylated by CitA.

It localises to the cytoplasm. Functionally, member of the two-component regulatory system CitA/CitB essential for expression of citrate-specific fermentation genes. Phosphorylated CitB binds to two sites in the citS-citC intergenic region where it probably activates transcription of both genes. This is Transcriptional regulatory protein CitB (citB) from Klebsiella pneumoniae.